We begin with the raw amino-acid sequence, 496 residues long: NADH-ubiquinone oxidoreductase 51 kDa subunit, mitochondrial (496 aa).

The N-terminal 30 residues, 1 to 30, are a transit peptide targeting the mitochondrion; it reads MISRAAAPSSSIASLSSRSLRAQAPAARSF. 98–107 is a binding site for NAD(+); that stretch reads GRGGAGFPSG. 214–261 is an FMN binding site; the sequence is GMGAYVCGEETSLIESIEGKAGKPRLKPPFPAAVGLFGCPSTVTNVET. [4Fe-4S] cluster-binding residues include C393, C396, C399, and C439.

Belongs to the complex I 51 kDa subunit family. Complex I is composed of about 40 different subunits. This is a component of the flavoprotein-sulfur (FP) fragment of the enzyme. FMN serves as cofactor. The cofactor is [4Fe-4S] cluster.

The protein resides in the mitochondrion inner membrane. It carries out the reaction a ubiquinone + NADH + 5 H(+)(in) = a ubiquinol + NAD(+) + 4 H(+)(out). Core subunit of the mitochondrial membrane respiratory chain NADH dehydrogenase (Complex I) that is believed to belong to the minimal assembly required for catalysis. Complex I functions in the transfer of electrons from NADH to the respiratory chain. The immediate electron acceptor for the enzyme is believed to be ubiquinone. The chain is NADH-ubiquinone oxidoreductase 51 kDa subunit, mitochondrial (NUO51) from Aspergillus niger.